Reading from the N-terminus, the 232-residue chain is MAQSKRVKAITAAVVPGKTYAFEDAIKILKTATKAKFVESIDVAVRLGVDAKKSDQQVRGSTVLPAGTGKSVRVAVFAPAGAKADEALAAGAEAVGMDDLAEKMQAGDLNYDVVIATPDAMRVVGKLGTLLGPRGLMPNPKVGTVSANPGEAVKNAKSGQVRYRTDKAGIIHCTIGKASFDDEALKSNLQALLLDLVKAKPATSKGTYLQKVSVSSTMGPGVTVDQSSLSLK.

This sequence belongs to the universal ribosomal protein uL1 family. Part of the 50S ribosomal subunit.

Its function is as follows. Binds directly to 23S rRNA. The L1 stalk is quite mobile in the ribosome, and is involved in E site tRNA release. In terms of biological role, protein L1 is also a translational repressor protein, it controls the translation of the L11 operon by binding to its mRNA. This Xanthomonas axonopodis pv. citri (strain 306) protein is Large ribosomal subunit protein uL1.